The following is a 138-amino-acid chain: Large ribosomal subunit protein bL19 (138 aa).

It belongs to the bacterial ribosomal protein bL19 family.

This protein is located at the 30S-50S ribosomal subunit interface and may play a role in the structure and function of the aminoacyl-tRNA binding site. The polypeptide is Large ribosomal subunit protein bL19 (Rickettsia felis (strain ATCC VR-1525 / URRWXCal2) (Rickettsia azadi)).